We begin with the raw amino-acid sequence, 862 residues long: DNA replication licensing factor MCM4 (862 aa).

Residues 1-12 show a composition bias toward gly residues; that stretch reads MASRGGGGGGDG. Residues 1-132 are disordered; sequence MASRGGGGGG…GGGGGGAGAD (132 aa). 2 stretches are compositionally biased toward low complexity: residues 20–41 and 52–64; these read SSPD…PQSG and SASP…SLGG. The C4-type zinc-finger motif lies at 289 to 317; it reads CLVCGFYSEPVMVDRGRVTEPHICQKEQC. The 207-residue stretch at 453-659 folds into the MCM domain; it reads IYDRLTRSLA…QTDRRLAKHI (207 aa). 503 to 510 contributes to the ATP binding site; it reads GDPGTSKS. The short motif at 635-638 is the Arginine finger element; that stretch reads SRFD.

Belongs to the MCM family. In terms of assembly, component of the minichromosome maintenance (MCM) complex, a heterotetramer composed of MCM2, MCM3, MCM4, MCM5, MCM6 and MCM7.

Its subcellular location is the nucleus. It catalyses the reaction ATP + H2O = ADP + phosphate + H(+). Probable component of the MCM2-7 complex (MCM complex) that may function as a DNA helicase and which is essential to undergo a single round of replication initiation and elongation per cell cycle in eukaryotic cells. The sequence is that of DNA replication licensing factor MCM4 (MCM4) from Oryza sativa subsp. japonica (Rice).